The primary structure comprises 451 residues: MKTLILAAGLGKRMNSKYPKVIHKILGKPMINWVIDTAKSFGEVGVVLGHKHEMVEKVIPQDVKIFLQNEQLGTAHAVMCGFDFIPEKDNLLILYGDVPFISYETLKRLEKEHIESNSDVTILTAILENPAGYGRIVRGKKIEIVEDKDADEKIKKIKEINTGIYIFKGKFLKENIKKIKNDNAQKEYYLTDILKFTENISTVTTDDIDEVTGVNDRIQLSKLEKNMRKRINEKLMREGVRIIDPESVYIDITVKIGKDTIIYPFTFIEGETEIGEDCVIGPMTRIKDSKIGNNVNVIRSEVEKAIIEDNVSVGPFSRLREGTHLKSNVKIGNFVETKKSVIGKNTKAQHLTYLGDATIGENVNIGAGTITCNYDGVKKHPTIIEDGAFIGSNNSLVAPVKIGKNAITGAGSTITEDVPENSLGLGRARQVVIKDWVLRKKGGNQNADSKE.

The segment at 1-217 (MKTLILAAGL…IDEVTGVNDR (217 aa)) is pyrophosphorylase. Residues 6–9 (LAAG), lysine 20, glutamine 68, 73–74 (GT), 95–97 (YGD), glycine 134, glutamate 146, asparagine 161, and asparagine 215 each bind UDP-N-acetyl-alpha-D-glucosamine. Mg(2+) is bound at residue aspartate 97. Position 215 (asparagine 215) interacts with Mg(2+). Residues 218 to 238 (IQLSKLEKNMRKRINEKLMRE) form a linker region. An N-acetyltransferase region spans residues 239-451 (GVRIIDPESV…GGNQNADSKE (213 aa)). Residues arginine 320 and lysine 338 each coordinate UDP-N-acetyl-alpha-D-glucosamine. Histidine 350 serves as the catalytic Proton acceptor. UDP-N-acetyl-alpha-D-glucosamine contacts are provided by tyrosine 353 and asparagine 364. Acetyl-CoA-binding positions include alanine 367, 373–374 (NY), serine 392, alanine 410, and arginine 427.

The protein in the N-terminal section; belongs to the N-acetylglucosamine-1-phosphate uridyltransferase family. This sequence in the C-terminal section; belongs to the transferase hexapeptide repeat family. Homotrimer. Mg(2+) serves as cofactor.

The protein resides in the cytoplasm. The catalysed reaction is alpha-D-glucosamine 1-phosphate + acetyl-CoA = N-acetyl-alpha-D-glucosamine 1-phosphate + CoA + H(+). It carries out the reaction N-acetyl-alpha-D-glucosamine 1-phosphate + UTP + H(+) = UDP-N-acetyl-alpha-D-glucosamine + diphosphate. It participates in nucleotide-sugar biosynthesis; UDP-N-acetyl-alpha-D-glucosamine biosynthesis; N-acetyl-alpha-D-glucosamine 1-phosphate from alpha-D-glucosamine 6-phosphate (route II): step 2/2. The protein operates within nucleotide-sugar biosynthesis; UDP-N-acetyl-alpha-D-glucosamine biosynthesis; UDP-N-acetyl-alpha-D-glucosamine from N-acetyl-alpha-D-glucosamine 1-phosphate: step 1/1. Its pathway is bacterial outer membrane biogenesis; LPS lipid A biosynthesis. In terms of biological role, catalyzes the last two sequential reactions in the de novo biosynthetic pathway for UDP-N-acetylglucosamine (UDP-GlcNAc). The C-terminal domain catalyzes the transfer of acetyl group from acetyl coenzyme A to glucosamine-1-phosphate (GlcN-1-P) to produce N-acetylglucosamine-1-phosphate (GlcNAc-1-P), which is converted into UDP-GlcNAc by the transfer of uridine 5-monophosphate (from uridine 5-triphosphate), a reaction catalyzed by the N-terminal domain. This Thermosipho africanus (strain TCF52B) protein is Bifunctional protein GlmU.